Here is a 216-residue protein sequence, read N- to C-terminus: MOB kinase activator 1A (216 aa).

Residue S2 is modified to N-acetylserine. A phosphothreonine mark is found at T12 and T35. Residue T74 is modified to Phosphothreonine; by STK3/MST2. The Zn(2+) site is built by C79, C84, H161, and H166. T181 carries the post-translational modification Phosphothreonine.

The protein belongs to the MOB1/phocein family. As to quaternary structure, binds STK38 and STK38L. Interacts with LATS1 and LATS2. Forms a tripartite complex with STK38 and STK3/MST2. In terms of processing, phosphorylated by STK3/MST2 and STK4/MST1 and this phosphorylation enhances its binding to LATS1. Adrenal gland, bone marrow, brain, placenta, prostate, salivary gland, skeletal muscle, testis, thymus, thyroid gland, heart, spinal cord, fetal brain and fetal liver.

Activator of LATS1/2 in the Hippo signaling pathway which plays a pivotal role in organ size control and tumor suppression by restricting proliferation and promoting apoptosis. The core of this pathway is composed of a kinase cascade wherein STK3/MST2 and STK4/MST1, in complex with its regulatory protein SAV1, phosphorylates and activates LATS1/2 in complex with its regulatory protein MOB1, which in turn phosphorylates and inactivates YAP1 oncoprotein and WWTR1/TAZ. Phosphorylation of YAP1 by LATS1/2 inhibits its translocation into the nucleus to regulate cellular genes important for cell proliferation, cell death, and cell migration. Stimulates the kinase activity of STK38 and STK38L. Acts cooperatively with STK3/MST2 to activate STK38. In Homo sapiens (Human), this protein is MOB kinase activator 1A.